The sequence spans 319 residues: Phospho-N-acetylmuramoyl-pentapeptide-transferase (319 aa).

10 helical membrane-spanning segments follow: residues Met1 to Met21, Thr53 to Trp73, Leu77 to Trp97, Phe117 to Gln137, Phe140 to Phe160, Gly172 to Gln192, Thr195 to Asn215, Ile221 to Val241, Leu249 to Phe269, and Gly298 to Leu318.

This sequence belongs to the glycosyltransferase 4 family. MraY subfamily. The cofactor is Mg(2+).

The protein localises to the cell membrane. It carries out the reaction UDP-N-acetyl-alpha-D-muramoyl-L-alanyl-gamma-D-glutamyl-L-lysyl-D-alanyl-D-alanine + di-trans,octa-cis-undecaprenyl phosphate = Mur2Ac(oyl-L-Ala-gamma-D-Glu-L-Lys-D-Ala-D-Ala)-di-trans,octa-cis-undecaprenyl diphosphate + UMP. Its pathway is cell wall biogenesis; peptidoglycan biosynthesis. In terms of biological role, catalyzes the initial step of the lipid cycle reactions in the biosynthesis of the cell wall peptidoglycan: transfers peptidoglycan precursor phospho-MurNAc-pentapeptide from UDP-MurNAc-pentapeptide onto the lipid carrier undecaprenyl phosphate, yielding undecaprenyl-pyrophosphoryl-MurNAc-pentapeptide, known as lipid I. The chain is Phospho-N-acetylmuramoyl-pentapeptide-transferase from Limosilactobacillus fermentum (strain NBRC 3956 / LMG 18251) (Lactobacillus fermentum).